A 560-amino-acid chain; its full sequence is DNA ligase B (560 aa).

Residue Lys-124 is the N6-AMP-lysine intermediate of the active site.

It belongs to the NAD-dependent DNA ligase family. LigB subfamily.

It catalyses the reaction NAD(+) + (deoxyribonucleotide)n-3'-hydroxyl + 5'-phospho-(deoxyribonucleotide)m = (deoxyribonucleotide)n+m + AMP + beta-nicotinamide D-nucleotide.. Its function is as follows. Catalyzes the formation of phosphodiester linkages between 5'-phosphoryl and 3'-hydroxyl groups in double-stranded DNA using NAD as a coenzyme and as the energy source for the reaction. This chain is DNA ligase B, found in Citrobacter koseri (strain ATCC BAA-895 / CDC 4225-83 / SGSC4696).